Here is a 378-residue protein sequence, read N- to C-terminus: Chaperone protein DnaJ (378 aa).

Residues 5-70 (DYYQILGIPK…EKRTAYDQYG (66 aa)) enclose the J domain. The CR-type zinc-finger motif lies at 133–211 (GTTKEIRIPT…CRGQGRIKTN (79 aa)). Zn(2+) is bound by residues cysteine 146, cysteine 149, cysteine 163, cysteine 166, cysteine 185, cysteine 188, cysteine 199, and cysteine 202. CXXCXGXG motif repeat units lie at residues 146-153 (CKTCYGMG), 163-170 (CSTCHGKG), 185-192 (CPTCNGIG), and 199-206 (CRMCRGQG).

This sequence belongs to the DnaJ family. Homodimer. The cofactor is Zn(2+).

It localises to the cytoplasm. Its function is as follows. Participates actively in the response to hyperosmotic and heat shock by preventing the aggregation of stress-denatured proteins and by disaggregating proteins, also in an autonomous, DnaK-independent fashion. Unfolded proteins bind initially to DnaJ; upon interaction with the DnaJ-bound protein, DnaK hydrolyzes its bound ATP, resulting in the formation of a stable complex. GrpE releases ADP from DnaK; ATP binding to DnaK triggers the release of the substrate protein, thus completing the reaction cycle. Several rounds of ATP-dependent interactions between DnaJ, DnaK and GrpE are required for fully efficient folding. Also involved, together with DnaK and GrpE, in the DNA replication of plasmids through activation of initiation proteins. In Buchnera aphidicola subsp. Schizaphis graminum (strain Sg), this protein is Chaperone protein DnaJ.